The chain runs to 1034 residues: Translation initiation factor IF-2 (1034 aa).

2 disordered regions span residues 118 to 140 (AAEAVDMQPESVEAQAPAPQSVE) and 154 to 446 (EAEA…NESA). Composition is skewed to low complexity over residues 162–178 (TPPVETPAVEAVEAAAP) and 212–228 (PAVKAEAEPQSAQPAAS). A compositionally biased stretch (basic and acidic residues) spans 304–315 (DRAREDARRAAE). The tr-type G domain maps to 535–702 (PRAPVVTVMG…NVLLQAEILE (168 aa)). The segment at 544–551 (GHVDHGKT) is G1. 544-551 (GHVDHGKT) serves as a coordination point for GTP. The tract at residues 569-573 (GITQH) is G2. A G3 region spans residues 590–593 (DTPG). GTP is bound by residues 590–594 (DTPGH) and 644–647 (NKID). A G4 region spans residues 644-647 (NKID). Positions 680 to 682 (SAK) are G5.

It belongs to the TRAFAC class translation factor GTPase superfamily. Classic translation factor GTPase family. IF-2 subfamily.

It localises to the cytoplasm. Its function is as follows. One of the essential components for the initiation of protein synthesis. Protects formylmethionyl-tRNA from spontaneous hydrolysis and promotes its binding to the 30S ribosomal subunits. Also involved in the hydrolysis of GTP during the formation of the 70S ribosomal complex. This is Translation initiation factor IF-2 from Bordetella avium (strain 197N).